The chain runs to 579 residues: Putative ABC transporter ATP-binding protein VPA1482 (579 aa).

ABC transporter domains are found at residues 3 to 244 and 299 to 533; these read IEFS…GIRE and LEVR…ANLT. Residues 37–44 and 332–339 each bind ATP; these read GPSGSGKS and GKNGSGKS.

The protein belongs to the ABC transporter superfamily.

It localises to the cell inner membrane. Functionally, probably part of an ABC transporter complex. Responsible for energy coupling to the transport system. This Vibrio parahaemolyticus serotype O3:K6 (strain RIMD 2210633) protein is Putative ABC transporter ATP-binding protein VPA1482.